We begin with the raw amino-acid sequence, 366 residues long: Mitogen-activated protein kinase p38a (366 aa).

The region spanning 25-312 (YQDLQPVGSG…AEEALSHPYL (288 aa)) is the Protein kinase domain. Residues 31-39 (VGSGAYGQV) and Lys54 each bind ATP. The active-site Proton acceptor is the Asp154. The residue at position 184 (Thr184) is a Phosphothreonine. The TXY motif lies at 184–186 (TGY). Tyr186 is modified (phosphotyrosine).

The protein belongs to the protein kinase superfamily. CMGC Ser/Thr protein kinase family. MAP kinase subfamily. Requires Mg(2+) as cofactor. In terms of processing, dually phosphorylated on Thr-184 and Tyr-186, which activates the enzyme.

The protein resides in the nucleus. The enzyme catalyses L-seryl-[protein] + ATP = O-phospho-L-seryl-[protein] + ADP + H(+). It catalyses the reaction L-threonyl-[protein] + ATP = O-phospho-L-threonyl-[protein] + ADP + H(+). Its activity is regulated as follows. Activated by threonine and tyrosine phosphorylation by Mkk3 in response to environmental stress. Kinase involved in a signal transduction pathway. May down-regulate insect immunity gene expression after prolonged infection. The chain is Mitogen-activated protein kinase p38a from Drosophila melanogaster (Fruit fly).